Consider the following 343-residue polypeptide: UDP-3-O-acylglucosamine N-acyltransferase (343 aa).

The Proton acceptor role is filled by His-236.

It belongs to the transferase hexapeptide repeat family. LpxD subfamily. As to quaternary structure, homotrimer.

The enzyme catalyses a UDP-3-O-[(3R)-3-hydroxyacyl]-alpha-D-glucosamine + a (3R)-hydroxyacyl-[ACP] = a UDP-2-N,3-O-bis[(3R)-3-hydroxyacyl]-alpha-D-glucosamine + holo-[ACP] + H(+). It participates in bacterial outer membrane biogenesis; LPS lipid A biosynthesis. In terms of biological role, catalyzes the N-acylation of UDP-3-O-acylglucosamine using 3-hydroxyacyl-ACP as the acyl donor. Is involved in the biosynthesis of lipid A, a phosphorylated glycolipid that anchors the lipopolysaccharide to the outer membrane of the cell. In Syntrophotalea carbinolica (strain DSM 2380 / NBRC 103641 / GraBd1) (Pelobacter carbinolicus), this protein is UDP-3-O-acylglucosamine N-acyltransferase.